A 464-amino-acid polypeptide reads, in one-letter code: Divalent metal cation transporter MntH (464 aa).

Helical transmembrane passes span 57–77 (ILIAVGYMDPGNWITSIAGGA), 82–102 (SLLSVILISSLIAMLLQSMAA), 125–145 (GIILWLITESAIMATDVAEII), 157–177 (IPLVVGILITTADVLILLLLM), 186–206 (AIVATLVAVILLVFTYEVFLA), 229–249 (MLYLALGIVGATVMPHDLYLG), 281–301 (LTIAFIVNSLLLILGAALFFG), 321–341 (IVGAIASPMLSMLFAVALLSS), 376–396 (LLSVTPVLIFAIYYHGNEAKI), 399–419 (LLTLSQVFLSVALPFAIVPLV), and 443–463 (VATVVLVSLNIYLILQTVGVI).

This sequence belongs to the NRAMP family.

The protein resides in the cell membrane. H(+)-stimulated, divalent metal cation uptake system. The protein is Divalent metal cation transporter MntH of Levilactobacillus brevis (Lactobacillus brevis).